The primary structure comprises 63 residues: Large ribosomal subunit protein uL30 (63 aa).

This sequence belongs to the universal ribosomal protein uL30 family. As to quaternary structure, part of the 50S ribosomal subunit.

The sequence is that of Large ribosomal subunit protein uL30 from Rhodospirillum rubrum (strain ATCC 11170 / ATH 1.1.1 / DSM 467 / LMG 4362 / NCIMB 8255 / S1).